The following is a 141-amino-acid chain: Large ribosomal subunit protein uL11 (141 aa).

It belongs to the universal ribosomal protein uL11 family. As to quaternary structure, part of the ribosomal stalk of the 50S ribosomal subunit. Interacts with L10 and the large rRNA to form the base of the stalk. L10 forms an elongated spine to which L12 dimers bind in a sequential fashion forming a multimeric L10(L12)X complex. Post-translationally, one or more lysine residues are methylated.

Its function is as follows. Forms part of the ribosomal stalk which helps the ribosome interact with GTP-bound translation factors. In Clostridium tetani (strain Massachusetts / E88), this protein is Large ribosomal subunit protein uL11.